A 537-amino-acid chain; its full sequence is Hexosyltransferase GAUT11 (537 aa).

The Cytoplasmic segment spans residues 1-16; sequence MRRWPVDHRRRGRRRL. Residues 17-37 form a helical; Signal-anchor for type II membrane protein membrane-spanning segment; it reads SSWIWFLLGSFSVAGLVLFIV. Residues 38-537 are Lumenal-facing; that stretch reads QHYHHQQDPS…HPYLQDCVTA (500 aa). 6 N-linked (GlcNAc...) asparagine glycosylation sites follow: N66, N247, N299, N403, N436, and N525.

This sequence belongs to the glycosyltransferase 8 family. As to quaternary structure, monomer. In terms of tissue distribution, expressed in roots, inflorescences, siliques, seeds, leaves and stems.

The protein resides in the golgi apparatus membrane. The enzyme catalyses [(1-&gt;4)-alpha-D-galacturonosyl](n) + UDP-alpha-D-galacturonate = [(1-&gt;4)-alpha-D-galacturonosyl](n+1) + UDP + H(+). Its pathway is glycan metabolism; pectin biosynthesis. Its function is as follows. Glycosyltransferase involved in pectin and/or xylans biosynthesis in cell walls. Required for the biosynthesis of pectin in seed coat epidermal (SCE) cells. Collaboratively with MUCI70, essential for the accumulation of seed mucilage, a gelatinous wall rich in unbranched rhamnogalacturonan I (RG I), and for shaping the surface morphology of seeds. Catalyzes homogalacturonan (HG) elongation by acting as an HG alpha-1,4 galacturonic acid transferase. This chain is Hexosyltransferase GAUT11, found in Arabidopsis thaliana (Mouse-ear cress).